Consider the following 381-residue polypeptide: Putative F-box/kelch-repeat protein At3g17570 (381 aa).

One can recognise an F-box domain in the interval 1–45 (MFTDLPRDLETEILSRVPATSLQKLKPTCKRWYTLFKDPEFLKKH). 3 Kelch repeats span residues 151–199 (SYKI…TLKG), 229–281 (LLYQ…KIVE), and 331–379 (RFYI…GGKR).

The chain is Putative F-box/kelch-repeat protein At3g17570 from Arabidopsis thaliana (Mouse-ear cress).